The sequence spans 451 residues: MKNIEEMPSKSQLVAHRSRGLINTSNTCFMNVILQSLTGCQLFLRVIKNLSDLEDLGKYPTLHSFNQFYTEYFSNPTSNILNNNSNSTTTTSSSSTTATTTSTSNNNKSQTPTSPIQQHHQSQTNGLSNQPSVATQSQQQQQPQPPINPKHFNDLVKSFNSKVSPVPQTTVSPHSMVQVSKKKLKLQLYNNSLPQTICQQDAQEFLVFLLDLIHEEFLTLIKDIDIPKEDDKSTPTSTSIVDDNWEVVGKKGKTAIITNSQQELPKTPISQIFSGVLRSSFNRTGSKESITVEPFYCLHLDIRPEEINSLEDALKFFMKPEIIEGYTCSTKKIEISASKSWSFESLPRILIVHFKRFAFESDTSKKLDKLIRFPTQLSLSTASNHQTQKKYSLFSVVSHHGRGLSQGHYTCDIYQPQQAQWIRYDDSTFTEVKEQDVLNREAYLLLYQLVN.

A USP domain is found at 19-450 (RGLINTSNTC…EAYLLLYQLV (432 aa)). Positions 83–115 (NNSNSTTTTSSSSTTATTTSTSNNNKSQTPTSP) are enriched in low complexity. A disordered region spans residues 83-154 (NNSNSTTTTS…PPINPKHFND (72 aa)). Polar residues predominate over residues 116–135 (IQQHHQSQTNGLSNQPSVAT). Catalysis depends on His399, which acts as the Nucleophile. His408 serves as the catalytic Proton acceptor.

The protein belongs to the peptidase C19 family. As to quaternary structure, interacts with mkkA (via F-box/WD40 domains).

The catalysed reaction is Thiol-dependent hydrolysis of ester, thioester, amide, peptide and isopeptide bonds formed by the C-terminal Gly of ubiquitin (a 76-residue protein attached to proteins as an intracellular targeting signal).. In terms of biological role, required for proper prespore cell patterning. Plays a role in stabilizing mkkA by preventing it from being targeted for degradation. ubcB and ubpB differentially control ubiquitination/deubiquitination and degradation of mkkA in a cell-type-specific and temporally regulated manner. This Dictyostelium discoideum (Social amoeba) protein is Ubiquitin hydrolase B (ubpB).